The following is a 194-amino-acid chain: Adenylate kinase isoenzyme 1 (194 aa).

An N-acetylmethionine modification is found at M1. 18–23 contributes to the ATP binding site; it reads GSGKGT. Phosphoserine is present on S38. The interval 38 to 67 is NMP; sequence STGDLLRSEVSSGSARGKKLSEIMEKGQLV. Residues T39, R44, 65 to 67, 94 to 97, and Q101 each bind AMP; these read QLV and GYPR. The LID stretch occupies residues 131–141; sequence KRGETSGRVDD. Residue R132 participates in ATP binding. Residues R138 and R149 each coordinate AMP. G177 serves as a coordination point for ATP.

This sequence belongs to the adenylate kinase family. AK1 subfamily. Monomer. It depends on Mg(2+) as a cofactor.

It is found in the cytoplasm. It catalyses the reaction a ribonucleoside 5'-phosphate + ATP = a ribonucleoside 5'-diphosphate + ADP. The enzyme catalyses AMP + ATP = 2 ADP. It carries out the reaction dAMP + ATP = dADP + ADP. The catalysed reaction is dATP + AMP = dADP + ADP. It catalyses the reaction dAMP + dATP = 2 dADP. The enzyme catalyses a 2'-deoxyribonucleoside 5'-diphosphate + ATP = a 2'-deoxyribonucleoside 5'-triphosphate + ADP. It carries out the reaction a ribonucleoside 5'-diphosphate + ATP = a ribonucleoside 5'-triphosphate + ADP. The catalysed reaction is CDP + GTP = CTP + GDP. It catalyses the reaction GDP + ATP = GTP + ADP. The enzyme catalyses UDP + ATP = UTP + ADP. It carries out the reaction GTP + UDP = UTP + GDP. The catalysed reaction is dTDP + GTP = dTTP + GDP. It catalyses the reaction dCDP + GTP = dCTP + GDP. The enzyme catalyses dGDP + ATP = dGTP + ADP. It carries out the reaction dADP + GTP = dATP + GDP. The catalysed reaction is thiamine diphosphate + ADP = thiamine triphosphate + AMP. In terms of biological role, catalyzes the reversible transfer of the terminal phosphate group between ATP and AMP. Also displays broad nucleoside diphosphate kinase activity. Plays an important role in cellular energy homeostasis and in adenine nucleotide metabolism. Also catalyzes at a very low rate the synthesis of thiamine triphosphate (ThTP) from thiamine diphosphate (ThDP) and ADP. This Homo sapiens (Human) protein is Adenylate kinase isoenzyme 1.